An 824-amino-acid chain; its full sequence is MEGPRSDVGRWGRSPWQPTTPSPEPEPEPEPDRSSRSRRGGGRSFWARCCGCCSCGNRADDDWGPEPSGSRSRGTSSRGGGSRGGDSRGRDSRGGRRPESRGSGVNAAGDGTIREGMLVVNGVDLLCSRSDQNRREHHTDEFEYDELILRRGQPFHIILFLNREYESSDRIALELLIGNNPEVGKGTHVIIPVGKGGSGGWKAQVTKTNGHNLTLRVHTSPNAIIGKFQFTVRTRSEAGEFQLPFDPRNEIYILFNPWCPEDIVYVDHEDWRQEYVLNESGRIYYGTEAQIGERTWNYGQFDHGVLDACLYILDRRGMPYGGRGDPVSVSRVVSAMVNSLDDNGVLIGNWTGDYSRGTNPSAWVGSVEILLSYLRTGYSVPYGQCWVFAGVTTTVLRCLGLATRTVTNFNSAHDTDTSLTMDIYFDENMKPLEHLNHDSVWNFHVWNDCWMKRPDLPSGFDGWQVVDATPQETSSGIFCCGPCSVESIKNGLVYMKYDTPFIFAEVNSDKVYWQRQDDGSFKIVYVEEKAIGTLIVTKAINSNMREDITHIYKHPEGSEAERKAVEKAAAHGSKPNVYATRDSAEDVAMQVEAQDAVMGQDLTVSVVLTNRGSSRRTVKLHLYLCVTYYTGVSGPTFKETKKEVVLAPGASDTVAMPVAYKEYKPHLVDQGAMLLNVSGHVKESGQVLAKQHTFRLRTPDLSLTLLGAAVVGQECEVQIVFKNPLPITLTNVVFRLEGSGLQRPKVLNVGDIGGNETVTLRQTFVPVRPGPRQLIASLDSPQLSQVHGVIQVDVAPSSGGRGFSEAVGDSRSGENIPMAFRGGA.

A compositionally biased stretch (basic and acidic residues) spans 1–10 (MEGPRSDVGR). Disordered regions lie at residues 1–44 (MEGP…GGRS) and 61–110 (DDWG…AAGD). Thr-20 carries the post-translational modification Phosphothreonine. 5 positions are modified to phosphoserine: Ser-22, Ser-70, Ser-92, Ser-100, and Ser-103. Residues 65-76 (PEPSGSRSRGTS) are compositionally biased toward low complexity. Residues 85–100 (GDSRGRDSRGGRRPES) show a composition bias toward basic and acidic residues. Residues Cys-385, His-444, and Asp-467 contribute to the active site. 4 residues coordinate Ca(2+): Asn-507, Asp-509, Glu-556, and Glu-561. The tract at residues 801-824 (RGFSEAVGDSRSGENIPMAFRGGA) is disordered. A Phosphoserine modification is found at Ser-812.

Belongs to the transglutaminase superfamily. Transglutaminase family. Interacts with PLAAT4. Ca(2+) is required as a cofactor. Post-translationally, palmitoylated. In terms of processing, the membrane anchorage region possesses a cluster of five cysteines within which fatty acid(s) may become thioester-linked. It is subject to phorbol ester-stimulated phosphorylation and is hypersensitive to proteolysis, which releases the enzyme in a soluble form. Tyrosine-phosphorylated.

It localises to the membrane. The enzyme catalyses L-glutaminyl-[protein] + L-lysyl-[protein] = [protein]-L-lysyl-N(6)-5-L-glutamyl-[protein] + NH4(+). In terms of biological role, catalyzes the cross-linking of proteins and the conjugation of polyamines to proteins. Responsible for cross-linking epidermal proteins during formation of the stratum corneum. Involved in cell proliferation. This is Protein-glutamine gamma-glutamyltransferase K (Tgm1) from Rattus norvegicus (Rat).